The following is a 214-amino-acid chain: Pyridoxine/pyridoxamine 5'-phosphate oxidase (214 aa).

Residues 8–11 and Lys-66 each bind substrate; that span reads RINY. Residues 61-66, 76-77, Arg-82, Lys-83, and Gln-105 each bind FMN; these read RIVLIK and FT. The substrate site is built by Tyr-123, Arg-127, and Ser-131. FMN is bound by residues 140-141 and Trp-184; that span reads QS. 190–192 is a binding site for substrate; that stretch reads RLH. Arg-194 contributes to the FMN binding site.

It belongs to the pyridoxamine 5'-phosphate oxidase family. Homodimer. FMN serves as cofactor.

The catalysed reaction is pyridoxamine 5'-phosphate + O2 + H2O = pyridoxal 5'-phosphate + H2O2 + NH4(+). The enzyme catalyses pyridoxine 5'-phosphate + O2 = pyridoxal 5'-phosphate + H2O2. It participates in cofactor metabolism; pyridoxal 5'-phosphate salvage; pyridoxal 5'-phosphate from pyridoxamine 5'-phosphate: step 1/1. The protein operates within cofactor metabolism; pyridoxal 5'-phosphate salvage; pyridoxal 5'-phosphate from pyridoxine 5'-phosphate: step 1/1. Catalyzes the oxidation of either pyridoxine 5'-phosphate (PNP) or pyridoxamine 5'-phosphate (PMP) into pyridoxal 5'-phosphate (PLP). The polypeptide is Pyridoxine/pyridoxamine 5'-phosphate oxidase (Burkholderia cenocepacia (strain HI2424)).